The primary structure comprises 423 residues: Zinc finger protein Gfi-1 (423 aa).

The SNAG domain stretch occupies residues 1–20; sequence MPRSFLVKSKKAHSYHQPRS. The interval 1–102 is disordered; sequence MPRSFLVKSK…PPSPSVSPAS (102 aa). Residues Ser-20 and Ser-57 each carry the phosphoserine modification. The segment covering 48 to 57 has biased composition (basic and acidic residues); the sequence is SKMEPRERLS. The interval 141–258 is required for interaction with RELA; it reads RQCSALERSA…LLLGGGSYKC (118 aa). 6 consecutive C2H2-type zinc fingers follow at residues 256–279, 285–307, 313–335, 341–363, 369–391, and 397–420; these read YKCI…RRSH, FACE…KAVH, FDCK…LLIH, YPCQ…TFIH, HKCQ…SRKH, and FGCD…ETQH.

As to quaternary structure, interacts with U2AF1L4. Component of RCOR-GFI-KDM1A-HDAC complexes. Interacts directly with RCOR1, KDM1A and HDAC2. Also interacts with HDAC1. regions. Interacts (via the zinc-finger domain) with ARIH2; the interaction prevents GFI1 ubiquitination and proteasomal degradation. Interacts with PIAS3; the interaction relieves the inhibitory effect of PIAS3 on STAT3-mediated transcriptional activity. Forms a complex with EHMT2 and HDAC1 to promote 'Lys-9' dimethylation of H3 (H3K9Me2) and repress expression of target genes. Interacts directly with EHMT2. Component of the GFI1-AJUBA-HDAC1 repressor complex. Interacts directly with AJUBA (via ITS LIM domains); the interaction results in the HDAC-dependent corepression of a subset of GFI1 target genes and, occurs independent of the SNAG domain. Interacts with SPI1; the interaction inhibits SPI1 transcriptional activity targeted at macrophage-specific genes, repressing macrophage differentiation of myeloid progenitor cells and promoting granulocyte commitment. Interacts with RUNX1T1; the interaction represses HDAC-mediated transcriptional activity. Interacts with RELA; the interaction occurs on liposaccharide (LPS) stimulation controls RELA DNA binding activity and regulates endotoxin-mediated TOLL-like receptor inflammatory response. Interacts (via the C-terminal zinc fingers) with ZBTB17; the interaction results in the recruitment of GFI1 to the CDKN1A/p21 promoter and repression of CDKN1A/p21 transcription. Post-translationally, ubiquitinated. Restricted to lymphoid tissues and testes in adult animals.

The protein localises to the nucleus. Transcription repressor essential for hematopoiesis. Functions in a cell-context and development-specific manner. Binds to 5'-TAAATCAC[AT]GCA-3' in the promoter region of a large number of genes. Component of several complexes, including the EHMT2-GFI1-HDAC1, AJUBA-GFI1-HDAC1 and RCOR-GFI-KDM1A-HDAC complexes, that suppress, via histone deacetylase (HDAC) recruitment, a number of genes implicated in multilineage blood cell development. Regulates neutrophil differentiation, promotes proliferation of lymphoid cells, and is required for granulocyte development. Inhibits SPI1 transcriptional activity at macrophage-specific genes, repressing macrophage differentiation of myeloid progenitor cells and promoting granulocyte commitment. Mediates, together with U2AF1L4, the alternative splicing of CD45 and controls T-cell receptor signaling. Regulates the endotoxin-mediated Toll-like receptor (TLR) inflammatory response by antagonizing RELA. Cooperates with CBFA2T2 to regulate ITGB1-dependent neurite growth. Controls cell-cycle progression by repressing CDKNIA/p21 transcription in response to TGFB1 via recruitment of GFI1 by ZBTB17 to the CDKNIA/p21 and CDKNIB promoters. Required for the maintenance of inner ear hair cells. In addition to its role in transcription, acts as a substrate adapter for PRMT1 in the DNA damage response: facilitates the recognition of TP53BP1 and MRE11 substrates by PRMT1, promoting their methylation and the DNA damage response. This chain is Zinc finger protein Gfi-1 (Gfi1), found in Rattus norvegicus (Rat).